The primary structure comprises 328 residues: tRNA dimethylallyltransferase (328 aa).

23 to 30 serves as a coordination point for ATP; the sequence is GPTASGKS. 25–30 contributes to the substrate binding site; sequence TASGKS. Residues 48–51 form an interaction with substrate tRNA region; that stretch reads DSMQ.

The protein belongs to the IPP transferase family. As to quaternary structure, monomer. Mg(2+) is required as a cofactor.

It carries out the reaction adenosine(37) in tRNA + dimethylallyl diphosphate = N(6)-dimethylallyladenosine(37) in tRNA + diphosphate. In terms of biological role, catalyzes the transfer of a dimethylallyl group onto the adenine at position 37 in tRNAs that read codons beginning with uridine, leading to the formation of N6-(dimethylallyl)adenosine (i(6)A). The protein is tRNA dimethylallyltransferase of Rhodopseudomonas palustris (strain BisA53).